The following is a 139-amino-acid chain: Holo-[acyl-carrier-protein] synthase (139 aa).

Asp8 and Glu57 together coordinate Mg(2+).

The protein belongs to the P-Pant transferase superfamily. AcpS family. The cofactor is Mg(2+).

It is found in the cytoplasm. It catalyses the reaction apo-[ACP] + CoA = holo-[ACP] + adenosine 3',5'-bisphosphate + H(+). Transfers the 4'-phosphopantetheine moiety from coenzyme A to a Ser of acyl-carrier-protein. The polypeptide is Holo-[acyl-carrier-protein] synthase (Dinoroseobacter shibae (strain DSM 16493 / NCIMB 14021 / DFL 12)).